A 503-amino-acid polypeptide reads, in one-letter code: Aspartyl/glutamyl-tRNA(Asn/Gln) amidotransferase subunit B (503 aa).

It belongs to the GatB/GatE family. GatB subfamily. In terms of assembly, heterotrimer of A, B and C subunits.

The catalysed reaction is L-glutamyl-tRNA(Gln) + L-glutamine + ATP + H2O = L-glutaminyl-tRNA(Gln) + L-glutamate + ADP + phosphate + H(+). It carries out the reaction L-aspartyl-tRNA(Asn) + L-glutamine + ATP + H2O = L-asparaginyl-tRNA(Asn) + L-glutamate + ADP + phosphate + 2 H(+). Its function is as follows. Allows the formation of correctly charged Asn-tRNA(Asn) or Gln-tRNA(Gln) through the transamidation of misacylated Asp-tRNA(Asn) or Glu-tRNA(Gln) in organisms which lack either or both of asparaginyl-tRNA or glutaminyl-tRNA synthetases. The reaction takes place in the presence of glutamine and ATP through an activated phospho-Asp-tRNA(Asn) or phospho-Glu-tRNA(Gln). The protein is Aspartyl/glutamyl-tRNA(Asn/Gln) amidotransferase subunit B of Cereibacter sphaeroides (strain ATCC 17029 / ATH 2.4.9) (Rhodobacter sphaeroides).